Reading from the N-terminus, the 95-residue chain is Aspartyl/glutamyl-tRNA(Asn/Gln) amidotransferase subunit C (95 aa).

The protein belongs to the GatC family. In terms of assembly, heterotrimer of A, B and C subunits.

The enzyme catalyses L-glutamyl-tRNA(Gln) + L-glutamine + ATP + H2O = L-glutaminyl-tRNA(Gln) + L-glutamate + ADP + phosphate + H(+). It carries out the reaction L-aspartyl-tRNA(Asn) + L-glutamine + ATP + H2O = L-asparaginyl-tRNA(Asn) + L-glutamate + ADP + phosphate + 2 H(+). Allows the formation of correctly charged Asn-tRNA(Asn) or Gln-tRNA(Gln) through the transamidation of misacylated Asp-tRNA(Asn) or Glu-tRNA(Gln) in organisms which lack either or both of asparaginyl-tRNA or glutaminyl-tRNA synthetases. The reaction takes place in the presence of glutamine and ATP through an activated phospho-Asp-tRNA(Asn) or phospho-Glu-tRNA(Gln). The sequence is that of Aspartyl/glutamyl-tRNA(Asn/Gln) amidotransferase subunit C from Rhodopseudomonas palustris (strain ATCC BAA-98 / CGA009).